Here is a 261-residue protein sequence, read N- to C-terminus: DNA-directed RNA polymerase subunit Rpo3 (261 aa).

It belongs to the archaeal Rpo3/eukaryotic RPB3 RNA polymerase subunit family. As to quaternary structure, part of the RNA polymerase complex.

It is found in the cytoplasm. The enzyme catalyses RNA(n) + a ribonucleoside 5'-triphosphate = RNA(n+1) + diphosphate. In terms of biological role, DNA-dependent RNA polymerase (RNAP) catalyzes the transcription of DNA into RNA using the four ribonucleoside triphosphates as substrates. The chain is DNA-directed RNA polymerase subunit Rpo3 from Pyrococcus furiosus (strain ATCC 43587 / DSM 3638 / JCM 8422 / Vc1).